Reading from the N-terminus, the 400-residue chain is Nicotinate phosphoribosyltransferase (400 aa).

At H220 the chain carries Phosphohistidine; by autocatalysis.

The protein belongs to the NAPRTase family. In terms of processing, transiently phosphorylated on a His residue during the reaction cycle. Phosphorylation strongly increases the affinity for substrates and increases the rate of nicotinate D-ribonucleotide production. Dephosphorylation regenerates the low-affinity form of the enzyme, leading to product release.

It carries out the reaction nicotinate + 5-phospho-alpha-D-ribose 1-diphosphate + ATP + H2O = nicotinate beta-D-ribonucleotide + ADP + phosphate + diphosphate. It functions in the pathway cofactor biosynthesis; NAD(+) biosynthesis; nicotinate D-ribonucleotide from nicotinate: step 1/1. In terms of biological role, catalyzes the synthesis of beta-nicotinate D-ribonucleotide from nicotinate and 5-phospho-D-ribose 1-phosphate at the expense of ATP. The polypeptide is Nicotinate phosphoribosyltransferase (Escherichia coli O7:K1 (strain IAI39 / ExPEC)).